The sequence spans 372 residues: 12-oxophytodienoate reductase 1 (372 aa).

The residue at position 1 (methionine 1) is an N-acetylmethionine. Residues 31–33, alanine 64, and glutamine 106 contribute to the FMN site; that span reads PLT. Histidine 183 serves as a coordination point for substrate. Tyrosine 188 acts as the Proton donor in catalysis. Arginine 235 contacts FMN. Arginine 275 contacts substrate. FMN-binding positions include 303–305 and 326–327; these read AGG and GR.

Belongs to the NADH:flavin oxidoreductase/NADH oxidase family. Requires FMN as cofactor. As to expression, mostly expressed in roots, also present in leaves, shoots and flowers. More abundant in cotyledons. In more details, expressed in peduncles, sepals, petals, around the abscission zone of siliques, maturing siliques and developing seeds.

The protein localises to the cytoplasm. The enzyme catalyses (1S,2S)-OPC-8 + NADP(+) = (9S,13S,15Z)-12-oxophyto-10,15-dienoate + NADPH + H(+). It functions in the pathway lipid metabolism; oxylipin biosynthesis. In terms of biological role, specifically cleaves olefinic bonds in alpha,beta-unsaturated carbonyls and may be involved in detoxification or modification of these reactive compounds. May be involved in the biosynthesis or metabolism of oxylipin signaling molecules. In vitro, reduces 9R,13R-12-oxophytodienoic acid (9R,13R-OPDA) to 9R,13R-OPC-8:0, but only poorly 9S,13S-OPDA, the natural precursor of jasmonic acid. Can detoxify the explosive 2,4,6-trinitrotoluene (TNT) in vitro and in vivo by catalyzing its nitroreduction to form hydroxylamino-dinitrotoluene (HADNT). The chain is 12-oxophytodienoate reductase 1 from Arabidopsis thaliana (Mouse-ear cress).